A 657-amino-acid chain; its full sequence is tRNA uridine 5-carboxymethylaminomethyl modification enzyme MnmG (657 aa).

Residue 13-18 participates in FAD binding; that stretch reads GGGHAG. 281–295 is an NAD(+) binding site; it reads GPRYCPSVEDKINRF.

The protein belongs to the MnmG family. Homodimer. Heterotetramer of two MnmE and two MnmG subunits. FAD is required as a cofactor.

The protein resides in the cytoplasm. Its function is as follows. NAD-binding protein involved in the addition of a carboxymethylaminomethyl (cmnm) group at the wobble position (U34) of certain tRNAs, forming tRNA-cmnm(5)s(2)U34. The protein is tRNA uridine 5-carboxymethylaminomethyl modification enzyme MnmG of Acidovorax ebreus (strain TPSY) (Diaphorobacter sp. (strain TPSY)).